Consider the following 205-residue polypeptide: Molybdenum cofactor guanylyltransferase (205 aa).

Residues Leu14–Gly16, Lys27, Asp77, and Asp107 each bind GTP. Residue Asp107 coordinates Mg(2+).

Belongs to the MobA family. In terms of assembly, monomer. Mg(2+) is required as a cofactor.

It localises to the cytoplasm. The enzyme catalyses Mo-molybdopterin + GTP + H(+) = Mo-molybdopterin guanine dinucleotide + diphosphate. In terms of biological role, transfers a GMP moiety from GTP to Mo-molybdopterin (Mo-MPT) cofactor (Moco or molybdenum cofactor) to form Mo-molybdopterin guanine dinucleotide (Mo-MGD) cofactor. The chain is Molybdenum cofactor guanylyltransferase from Burkholderia orbicola (strain MC0-3).